Here is a 411-residue protein sequence, read N- to C-terminus: 4-coumarate--CoA ligase (411 aa).

It belongs to the ATP-dependent AMP-binding enzyme family.

It carries out the reaction (E)-4-coumarate + ATP + CoA = (E)-4-coumaroyl-CoA + AMP + diphosphate. Converts p-coumaric acid into p-coumaryl CoA. This is necessary for the activation of the photoactive yellow protein (PYP) chromophore. The sequence is that of 4-coumarate--CoA ligase (pcl) from Cereibacter sphaeroides (strain ATCC 17023 / DSM 158 / JCM 6121 / CCUG 31486 / LMG 2827 / NBRC 12203 / NCIMB 8253 / ATH 2.4.1.) (Rhodobacter sphaeroides).